A 108-amino-acid chain; its full sequence is Protein Asterix (108 aa).

The tract at residues M1–N29 is disordered. The chain crosses the membrane as a helical span at residues V80 to L96.

It belongs to the Asterix family.

It is found in the membrane. The sequence is that of Protein Asterix from Drosophila melanogaster (Fruit fly).